The chain runs to 503 residues: Protein phosphatase eya-1 (503 aa).

Catalysis depends on Asp237, which acts as the Nucleophile. Mg(2+) is bound by residues Asp237 and Asp239. Residue Asp239 is the Proton donor of the active site.

Belongs to the HAD-like hydrolase superfamily. EYA family. As to quaternary structure, interacts (via C-terminus) with ceh-34 (via N-terminus). Mg(2+) is required as a cofactor. Expressed in body wall muscles. Expressed in BAG sensory neurons and in other head neurons.

Its subcellular location is the nucleus. The catalysed reaction is O-phospho-L-tyrosyl-[protein] + H2O = L-tyrosyl-[protein] + phosphate. In terms of biological role, tyrosine protein phosphatase. Acts probably as a transcription regulator in the embryonic and postembryonic development of several tissues including pharynx, vulva and gonads. Required for the development of anterior tissues during late embryogenesis. Together with ceh-34, required to specify the coelomocyte fate in embryonic and postembryonic precursors. In the anterior part of the embryo, prevents apoptosis in cells that are not fated to die. Together with ceh-34 activates proapoptotic factor egl-1 expression to promote motor neuron M4 sister cell apoptosis. Also promotes apoptosis of I1 pharyngeal neuron sister cell. Plays a role in locomotion and fertility. May play a role in resistance to heat and oxidative stresses. May cooperate with the transcription factors vab-3 and ceh-32 to repress transcription factor ets-5 expression in non BAG neuronal cells. The chain is Protein phosphatase eya-1 from Caenorhabditis elegans.